The following is a 188-amino-acid chain: Ribosome-recycling factor (188 aa).

This sequence belongs to the RRF family.

The protein resides in the cytoplasm. Its function is as follows. Responsible for the release of ribosomes from messenger RNA at the termination of protein biosynthesis. May increase the efficiency of translation by recycling ribosomes from one round of translation to another. This chain is Ribosome-recycling factor, found in Akkermansia muciniphila (strain ATCC BAA-835 / DSM 22959 / JCM 33894 / BCRC 81048 / CCUG 64013 / CIP 107961 / Muc).